The chain runs to 194 residues: Isopentenyl-diphosphate Delta-isomerase (194 aa).

Mn(2+) contacts are provided by H35 and H42. In terms of domain architecture, Nudix hydrolase spans 40–174 (PLHLAFSSYL…PWALSPWSVD (135 aa)). C77 is an active-site residue. Residue H79 coordinates Mn(2+). E97 serves as a coordination point for Mg(2+). 2 residues coordinate Mn(2+): E124 and E126. The active site involves E126.

This sequence belongs to the IPP isomerase type 1 family. Mg(2+) is required as a cofactor. It depends on Mn(2+) as a cofactor.

The protein localises to the cytoplasm. The catalysed reaction is isopentenyl diphosphate = dimethylallyl diphosphate. It participates in isoprenoid biosynthesis; dimethylallyl diphosphate biosynthesis; dimethylallyl diphosphate from isopentenyl diphosphate: step 1/1. In terms of biological role, catalyzes the 1,3-allylic rearrangement of the homoallylic substrate isopentenyl (IPP) to its highly electrophilic allylic isomer, dimethylallyl diphosphate (DMAPP). This chain is Isopentenyl-diphosphate Delta-isomerase, found in Frankia alni (strain DSM 45986 / CECT 9034 / ACN14a).